A 709-amino-acid polypeptide reads, in one-letter code: Protein transport protein SEC39 (709 aa).

Belongs to the SEC39 family. Component of a peripheral membrane protein complex consisting of DSL1, SEC39/DSL3 and TIP20. Bound to a SNARE complex consisting of UFE1, USE1, SEC20 and SEC22 or YKT6 through direct interaction of TIP20 with SEC20. Interacts with TIP20 and DSL1.

The protein localises to the endoplasmic reticulum membrane. In terms of biological role, required for protein transport between the Golgi and the endoplasmic reticulum. May contribute to tethering of coatomer-coated retrograde transport vesicles to the ER membrane through interaction with and stabilization of the SNARE complex. The polypeptide is Protein transport protein SEC39 (Saccharomyces cerevisiae (strain ATCC 204508 / S288c) (Baker's yeast)).